A 274-amino-acid chain; its full sequence is Large ribosomal subunit protein uL2 (274 aa).

A disordered region spans residues 223–274; sequence VAMNPVDHPMGGGEGKASGGHPRSRTGLYAKGKKTRNTNKYSKNYILSRKKR.

The protein belongs to the universal ribosomal protein uL2 family. As to quaternary structure, part of the 50S ribosomal subunit. Forms a bridge to the 30S subunit in the 70S ribosome.

One of the primary rRNA binding proteins. Required for association of the 30S and 50S subunits to form the 70S ribosome, for tRNA binding and peptide bond formation. It has been suggested to have peptidyltransferase activity; this is somewhat controversial. Makes several contacts with the 16S rRNA in the 70S ribosome. This is Large ribosomal subunit protein uL2 from Amoebophilus asiaticus (strain 5a2).